The chain runs to 311 residues: Porphobilinogen deaminase (311 aa).

S-(dipyrrolylmethanemethyl)cysteine is present on cysteine 242.

Belongs to the HMBS family. Monomer. Dipyrromethane is required as a cofactor.

The enzyme catalyses 4 porphobilinogen + H2O = hydroxymethylbilane + 4 NH4(+). The protein operates within porphyrin-containing compound metabolism; protoporphyrin-IX biosynthesis; coproporphyrinogen-III from 5-aminolevulinate: step 2/4. In terms of biological role, tetrapolymerization of the monopyrrole PBG into the hydroxymethylbilane pre-uroporphyrinogen in several discrete steps. The chain is Porphobilinogen deaminase from Hahella chejuensis (strain KCTC 2396).